A 613-amino-acid chain; its full sequence is Threonine--tRNA ligase (613 aa).

An editing domain region spans residues 1 to 147 (MRLLLIHARS…TITPQESAPQ (147 aa)). 2 catalytic regions span residues 199-495 (PRYI…PALP) and 200-495 (RYID…PALP). Residues C292, H343, and H464 each contribute to the Zn(2+) site.

It belongs to the class-II aminoacyl-tRNA synthetase family. In terms of assembly, homodimer. The cofactor is Zn(2+).

The protein resides in the cytoplasm. The enzyme catalyses tRNA(Thr) + L-threonine + ATP = L-threonyl-tRNA(Thr) + AMP + diphosphate + H(+). Functionally, catalyzes the attachment of threonine to tRNA(Thr) in a two-step reaction: L-threonine is first activated by ATP to form Thr-AMP and then transferred to the acceptor end of tRNA(Thr). Also edits incorrectly charged L-seryl-tRNA(Thr). This chain is Threonine--tRNA ligase, found in Caldivirga maquilingensis (strain ATCC 700844 / DSM 13496 / JCM 10307 / IC-167).